Reading from the N-terminus, the 249-residue chain is Adapter protein MecA (249 aa).

The protein belongs to the MecA family. In terms of assembly, homodimer.

Functionally, enables the recognition and targeting of unfolded and aggregated proteins to the ClpC protease or to other proteins involved in proteolysis. The polypeptide is Adapter protein MecA (Streptococcus thermophilus (strain ATCC BAA-491 / LMD-9)).